Here is an 818-residue protein sequence, read N- to C-terminus: Catenin beta (818 aa).

2 stretches are compositionally biased toward polar residues: residues 1-21 (METY…TPQG) and 48-66 (GDSG…SVSS). Disordered stretches follow at residues 1–24 (METY…GQYM) and 48–71 (GDSG…HGLD). 7 ARM repeats span residues 164 to 203 (NYQD…QLSK), 248 to 287 (RQGL…NLLL), 412 to 451 (DAAT…NLTC), 454 to 495 (QRNK…HLTS), 501 to 541 (EMAQ…NLAL), 543 to 582 (PANH…NTSA), and 648 to 687 (KEGA…RMSE). Residues 732 to 818 (QGFRGYQGSG…QMAAWFDTDL (87 aa)) are disordered.

The protein belongs to the beta-catenin family.

The protein resides in the cytoplasm. It is found in the cytoskeleton. Its function is as follows. Binds to the cytoplasmic domain of the cell-cell adhesion molecule E-cadherin, and perhaps to other (membrane) proteins. The association of catenins to cadherins produces a complex which is linked to the actin filament network, and which seems to be of primary importance for cadherins cell-adhesion properties. In Urechis caupo (Innkeeper worm), this protein is Catenin beta.